Consider the following 993-residue polypeptide: ATP-dependent DNA helicase MPH1 (993 aa).

In terms of domain architecture, Helicase ATP-binding spans 94–261 (IVHKSLFQNT…EVVNNLDISK (168 aa)). ATP is bound at residue 107–114 (IPTGMGKT). A DEAH box motif is present at residues 209-212 (DEAH). Positions 507–655 (KVERLHRQEQ…CIDYKKSDRI (149 aa)) constitute a Helicase C-terminal domain. Residues 530–551 (NDKLERSARRTGSSEEAQISGM) are disordered. Polar residues predominate over residues 539–551 (RTGSSEEAQISGM).

This sequence belongs to the DEAD box helicase family. DEAH subfamily. FANCM sub-subfamily. Interacts with the MHF histone-fold complex to form the FANCM-MHF complex.

Its subcellular location is the nucleus. It carries out the reaction ATP + H2O = ADP + phosphate + H(+). Its function is as follows. ATP-dependent DNA helicase involved in DNA damage repair by homologous recombination and in genome maintenance. Capable of unwinding D-loops. Plays a role in limiting crossover recombinants during mitotic DNA double-strand break (DSB) repair. Component of a FANCM-MHF complex which promotes gene conversion at blocked replication forks, probably by reversal of the stalled fork. This is ATP-dependent DNA helicase MPH1 from Saccharomyces cerevisiae (strain YJM789) (Baker's yeast).